We begin with the raw amino-acid sequence, 289 residues long: MNHLQLKKLLNHFFLEDIGTGDLTSQSIFGEQSCEAEIVAKSEGIFAGAAIIKEGFSLLDENVQSILHKKDGDMLHKGEVIAELHGPAAALLSGERVVLNLIQRLSGIATMTREAVRCLDDEQIKICDTRKTTPGLRMLEKYAVRAGGGYNHRFGLYDGIMIKDNHIAACGSILEACKKARQAAGHMVNIEVEIETEEQLREAIAAGADVIMFDNCPPDTVRHFAKLTPANIKTEASGGITLESLPAFKGTGVNYISLGFLTHSVKSLDISMDVTLSNESVEECCYVNS.

Residues arginine 96, 129 to 131, arginine 153, lysine 163, glutamate 193, aspartate 214, 237 to 239, and 258 to 260 contribute to the substrate site; these read TRK, SGG, and LGF.

This sequence belongs to the NadC/ModD family. As to quaternary structure, hexamer formed by 3 homodimers.

It carries out the reaction nicotinate beta-D-ribonucleotide + CO2 + diphosphate = quinolinate + 5-phospho-alpha-D-ribose 1-diphosphate + 2 H(+). The protein operates within cofactor biosynthesis; NAD(+) biosynthesis; nicotinate D-ribonucleotide from quinolinate: step 1/1. Involved in the catabolism of quinolinic acid (QA). The chain is Probable nicotinate-nucleotide pyrophosphorylase [carboxylating] (nadC) from Bacillus subtilis (strain 168).